The primary structure comprises 709 residues: Phosphoribosylformylglycinamidine synthase subunit PurL (709 aa).

Residue H36 is part of the active site. Residues Y39 and K80 each coordinate ATP. E82 serves as a coordination point for Mg(2+). Residues 83–86 (SHNH) and R105 contribute to the substrate site. The active-site Proton acceptor is H84. D106 provides a ligand contact to Mg(2+). Q226 provides a ligand contact to substrate. D252 contributes to the Mg(2+) binding site. Residue 294–296 (ETQ) participates in substrate binding. ATP-binding residues include D470 and G507. S510 contacts substrate.

The protein belongs to the FGAMS family. Monomer. Part of the FGAM synthase complex composed of 1 PurL, 1 PurQ and 2 PurS subunits.

The protein localises to the cytoplasm. The catalysed reaction is N(2)-formyl-N(1)-(5-phospho-beta-D-ribosyl)glycinamide + L-glutamine + ATP + H2O = 2-formamido-N(1)-(5-O-phospho-beta-D-ribosyl)acetamidine + L-glutamate + ADP + phosphate + H(+). Its pathway is purine metabolism; IMP biosynthesis via de novo pathway; 5-amino-1-(5-phospho-D-ribosyl)imidazole from N(2)-formyl-N(1)-(5-phospho-D-ribosyl)glycinamide: step 1/2. Its function is as follows. Part of the phosphoribosylformylglycinamidine synthase complex involved in the purines biosynthetic pathway. Catalyzes the ATP-dependent conversion of formylglycinamide ribonucleotide (FGAR) and glutamine to yield formylglycinamidine ribonucleotide (FGAM) and glutamate. The FGAM synthase complex is composed of three subunits. PurQ produces an ammonia molecule by converting glutamine to glutamate. PurL transfers the ammonia molecule to FGAR to form FGAM in an ATP-dependent manner. PurS interacts with PurQ and PurL and is thought to assist in the transfer of the ammonia molecule from PurQ to PurL. This chain is Phosphoribosylformylglycinamidine synthase subunit PurL, found in Saccharolobus solfataricus (strain ATCC 35092 / DSM 1617 / JCM 11322 / P2) (Sulfolobus solfataricus).